The sequence spans 633 residues: Pentatricopeptide repeat-containing protein At1g43980, mitochondrial (633 aa).

The transit peptide at 1 to 30 (MFQLLRRAHGLCMPSSLYFSRLVNRSLLSK) directs the protein to the mitochondrion. 14 PPR repeats span residues 50-80 (TTYW…IPDK), 81-111 (NTIT…MPER), 112-146 (DVVS…EIRP), 147-178 (TEFT…GVSR), 180-210 (NLVV…MEDR), 211-245 (DVVS…EIQP), 246-280 (DEYT…GFLS), 281-311 (NSIV…LEKW), 312-346 (DSVL…SVRP), 347-380 (DKFT…GFDL), 381-411 (DTAV…TDGK), 412-447 (DLIF…SLKP), 448-483 (DRVT…GVNP), and 484-514 (GNEH…IPFE). Residues 519 to 594 (IWEPILCASL…AQGSSKISIE (76 aa)) are type E motif.

The protein belongs to the PPR family. PCMP-E subfamily.

The protein localises to the mitochondrion. The protein is Pentatricopeptide repeat-containing protein At1g43980, mitochondrial (PCMP-E58) of Arabidopsis thaliana (Mouse-ear cress).